The following is a 548-amino-acid chain: SH2/SH3 adapter protein dreadlocks (548 aa).

Disordered stretches follow at residues 12-37 (IPDSSASSQQYPQQQQHPPQLPQHQN), 57-92 (QVPVPVPGSPAHHQRHSSLSQQQQLHHHRTLSTASS), and 113-146 (GSGSANGSGSGNSSSGSAAGNAGTQSMAGNMKHG). The segment covering 20–37 (QQYPQQQQHPPQLPQHQN) has biased composition (low complexity). Over residues 113-122 (GSGSANGSGS) the composition is skewed to gly residues. Low complexity predominate over residues 123–135 (GNSSSGSAAGNAG). The SH3 1 domain maps to 150–209 (DDVCYVVAKYDYAAQGAQELDLRKNERYLLLDDSKHWWRVQNSRNQSGYVPSNYVKKEKP). Residues 219 to 247 (VKKGSGSKTLPNCSPSRQVESPTMSRRLP) form a disordered region. A compositionally biased stretch (polar residues) spans 227–242 (TLPNCSPSRQVESPTM). 2 consecutive SH3 domains span residues 252-311 (EAIG…EDCD) and 324-386 (NVLD…ELND). The segment at 398–442 (SAGNGNGGGSNGGAGGGGGNDSMERRNEGNKPAAQSSGQPIERPN) is disordered. The segment covering 401–417 (NGNGGGSNGGAGGGGGN) has biased composition (gly residues). Positions 448–542 (WYYGAITRSQ…GEKLYLVRSL (95 aa)) constitute an SH2 domain.

In terms of assembly, interacts (via SH2 and SH3 domains) with Dscam1 (via cytoplasmic domain); the interaction is direct and requires Dscam1 to be phosphorylated. Interacts (via SH2 and SH3 domains) with InR/Insulin-like receptor (via C-terminal cytoplasmic region); the interaction requires InR kinase activity, probably for autophosphorylation stimulated by insulin signaling. Interacts with Ptp61F (via C-terminus); this interaction is independent of insulin stimulation. Interacts (via SH3 domain 2) with Pak (via N-terminal PXXP motif). Phosphorylated by Src42A and possibly by other tyrosine kinases. Constitutively dephosphorylated by its binding partner Ptp61F.

It is found in the perikaryon. The protein localises to the cell projection. Its subcellular location is the axon. It localises to the growth cone. Functionally, adapter protein that links cell surface receptor tyrosine phosphorylation to downstream signaling pathways and effectors, many of which are involved in regulation of the actin cytoskeleton. Recruited by Dscam1/Down syndrome cell adhesion molecule homolog and InR/insulin-like receptor. Recruits Pak to membranes, probably when dock/dreadlocks is associated with activated receptors. Required for guidance and targeting of photoreceptor (R cell) axon projections but not for axon outgrowth, differentiation or target induction in the developing eye. As part of a signaling pathway that involves the lbm/late bloomer protein, involved in synapse formation of the RP3 motorneuron at the muscle 7/6 cleft, probably by stimulating axon defasciculation from other SNb neurons. The protein is SH2/SH3 adapter protein dreadlocks of Drosophila melanogaster (Fruit fly).